A 254-amino-acid chain; its full sequence is Adenosylcobinamide-GDP ribazoletransferase (254 aa).

The next 6 helical transmembrane spans lie at 28–48, 62–81, 109–129, 138–158, 179–199, and 200–220; these read FRQTPVAFTVIGYPLGTIVAL, IGVYLLILIGVTGITHIDGI, VGVGGALAVTVTVVSLALGVL, VTFILVLTAEVGAKSAMALLV, LSLFPVILALTPLLLAIPYLG, and ASPTAAVVLTPLIVALVIKQW.

It belongs to the CobS family. Mg(2+) serves as cofactor.

Its subcellular location is the cell membrane. It catalyses the reaction alpha-ribazole + adenosylcob(III)inamide-GDP = adenosylcob(III)alamin + GMP + H(+). The catalysed reaction is alpha-ribazole 5'-phosphate + adenosylcob(III)inamide-GDP = adenosylcob(III)alamin 5'-phosphate + GMP + H(+). Its pathway is cofactor biosynthesis; adenosylcobalamin biosynthesis; adenosylcobalamin from cob(II)yrinate a,c-diamide: step 7/7. In terms of biological role, joins adenosylcobinamide-GDP and alpha-ribazole to generate adenosylcobalamin (Ado-cobalamin). Also synthesizes adenosylcobalamin 5'-phosphate from adenosylcobinamide-GDP and alpha-ribazole 5'-phosphate. This chain is Adenosylcobinamide-GDP ribazoletransferase, found in Haloquadratum walsbyi (strain DSM 16790 / HBSQ001).